A 487-amino-acid polypeptide reads, in one-letter code: Acetyl-coenzyme A carboxylase carboxyl transferase subunit beta, chloroplastic (487 aa).

The CoA carboxyltransferase N-terminal domain occupies 223–487; it reads LWIQCDNCYG…FFPLKKNEIK (265 aa). Cys227, Cys230, Cys243, and Cys246 together coordinate Zn(2+). The C4-type zinc finger occupies 227–246; sequence CDNCYGLMYKKVKMNVCEQC.

Belongs to the AccD/PCCB family. In terms of assembly, acetyl-CoA carboxylase is a heterohexamer composed of biotin carboxyl carrier protein, biotin carboxylase and 2 subunits each of ACCase subunit alpha and ACCase plastid-coded subunit beta (accD). It depends on Zn(2+) as a cofactor.

It localises to the plastid. The protein resides in the chloroplast stroma. It carries out the reaction N(6)-carboxybiotinyl-L-lysyl-[protein] + acetyl-CoA = N(6)-biotinyl-L-lysyl-[protein] + malonyl-CoA. Its pathway is lipid metabolism; malonyl-CoA biosynthesis; malonyl-CoA from acetyl-CoA: step 1/1. In terms of biological role, component of the acetyl coenzyme A carboxylase (ACC) complex. Biotin carboxylase (BC) catalyzes the carboxylation of biotin on its carrier protein (BCCP) and then the CO(2) group is transferred by the transcarboxylase to acetyl-CoA to form malonyl-CoA. This chain is Acetyl-coenzyme A carboxylase carboxyl transferase subunit beta, chloroplastic, found in Lepidium virginicum (Virginia pepperweed).